Reading from the N-terminus, the 560-residue chain is Formate--tetrahydrofolate ligase (560 aa).

An ATP-binding site is contributed by Thr-69 to Ser-76.

The protein belongs to the formate--tetrahydrofolate ligase family.

The catalysed reaction is (6S)-5,6,7,8-tetrahydrofolate + formate + ATP = (6R)-10-formyltetrahydrofolate + ADP + phosphate. It participates in one-carbon metabolism; tetrahydrofolate interconversion. In Listeria innocua serovar 6a (strain ATCC BAA-680 / CLIP 11262), this protein is Formate--tetrahydrofolate ligase.